Consider the following 292-residue polypeptide: MSMPATSTKTTKLATSLIDEYALLGWRAMLTEVNLSPKPGLVDRINCGAHKDMALEDFHRSALAIQGWLPRFIEFGACSAEMAPEAVLHGLRPIGMACEGDMFRATAGVNTHKGSIFSLGLLCAAIGRLLQLNQSLTPTTVCSTAASFCRGLTDRELRTNNSQLTAGQRLYQQLGLTGARGEAEAGYPLVINHALPHYLTLLDQGLDPELALLDTLLLLMAINGDTNVASRGGEGGLRWLQREAQTLLQKGGIRTPADLDYLRQFDRECIERNLSPGGSADLLILTWFLAQI.

This sequence belongs to the CitG/MdcB family.

The enzyme catalyses 3'-dephospho-CoA + ATP = 2'-(5''-triphospho-alpha-D-ribosyl)-3'-dephospho-CoA + adenine. Its function is as follows. Catalyzes the formation of 2-(5''-triphosphoribosyl)-3'-dephosphocoenzyme-A, the precursor of the prosthetic group of the holo-acyl carrier protein (gamma chain) of citrate lyase, from ATP and dephospho-CoA. This is 2-(5''-triphosphoribosyl)-3'-dephosphocoenzyme-A synthase from Escherichia coli O17:K52:H18 (strain UMN026 / ExPEC).